The following is a 912-amino-acid chain: Translation initiation factor IF-2 (912 aa).

The disordered stretch occupies residues 185-204; sequence NATRPKRKTKEEKQKEREER. Over residues 193–204 the composition is skewed to basic and acidic residues; that stretch reads TKEEKQKEREER. Residues 411–581 form the tr-type G domain; that stretch reads LRPPIVTIMG…LLEAELLDLK (171 aa). Residues 420-427 are G1; it reads GHVDHGKT. A GTP-binding site is contributed by 420–427; the sequence is GHVDHGKT. The interval 445 to 449 is G2; it reads GITQH. The interval 467-470 is G3; the sequence is DTPG. Residues 467-471 and 521-524 each bind GTP; these read DTPGH and NKID. The interval 521–524 is G4; sequence NKID. The tract at residues 557-559 is G5; it reads SAK.

This sequence belongs to the TRAFAC class translation factor GTPase superfamily. Classic translation factor GTPase family. IF-2 subfamily.

It localises to the cytoplasm. Its function is as follows. One of the essential components for the initiation of protein synthesis. Protects formylmethionyl-tRNA from spontaneous hydrolysis and promotes its binding to the 30S ribosomal subunits. Also involved in the hydrolysis of GTP during the formation of the 70S ribosomal complex. This Azobacteroides pseudotrichonymphae genomovar. CFP2 protein is Translation initiation factor IF-2.